The primary structure comprises 71 residues: Lantibiotic Flvbeta.c (71 aa).

Positions 1–33 (MENKFDMEKFKKLAAVVSEDELDTLLDETTVGA) are cleaved as a propeptide — cleaved by FlvT. The segment at residues 35–39 (SSNDC) is a cross-link (lanthionine (Ser-Cys); by FlvM2). The residue at position 36 (serine 36) is a 2,3-didehydroalanine (Ser); by FlvM2. Cross-links (beta-methyllanthionine (Thr-Cys); by FlvM2) lie at residues 54-60 (TSKFDWC), 62-65 (TGAC), and 66-69 (TTSC).

Post-translationally, contains LL-lanthionine and DL-beta-methyllanthionine, when coepressed in E.coli with the flavecin synthetase FlvM2.

Its subcellular location is the secreted. Its function is as follows. Lanthionine-containing peptide antibiotic (lantibiotic) that is probably active on Gram-positive bacteria, since its analog [Del1]Flvbeta.c shows antibacterial activity against M.luteus. This activity is not synergistically enhanced by [Del2]Flvalpha.a, an analog of Flvalpha.a, which is encoded by the same operon than Flvbeta.c. The bactericidal activity of lantibiotics is based on depolarization of energized bacterial cytoplasmic membranes, initiated by the formation of aqueous transmembrane pores. The sequence is that of Lantibiotic Flvbeta.c from Ruminococcus flavefaciens.